The sequence spans 477 residues: RTX-I toxin determinant D (477 aa).

Over methionine 1–leucine 59 the chain is Cytoplasmic. The helical transmembrane segment at isoleucine 60–valine 80 threads the bilayer. The Periplasmic portion of the chain corresponds to glutamate 81–arginine 477.

It belongs to the membrane fusion protein (MFP) (TC 8.A.1) family.

The protein localises to the cell inner membrane. Functionally, involved in the transport of the toxin RTX-I as well as that of RTX-II. The chain is RTX-I toxin determinant D (apxID) from Actinobacillus pleuropneumoniae (Haemophilus pleuropneumoniae).